An 806-amino-acid polypeptide reads, in one-letter code: Phenylalanine--tRNA ligase beta subunit (806 aa).

The tRNA-binding domain occupies N40–L155. The 76-residue stretch at V409 to V484 folds into the B5 domain. Residues D462, D468, E471, and E472 each contribute to the Mg(2+) site. Positions P712–R805 constitute an FDX-ACB domain.

Belongs to the phenylalanyl-tRNA synthetase beta subunit family. Type 1 subfamily. In terms of assembly, tetramer of two alpha and two beta subunits. Mg(2+) is required as a cofactor.

Its subcellular location is the cytoplasm. It catalyses the reaction tRNA(Phe) + L-phenylalanine + ATP = L-phenylalanyl-tRNA(Phe) + AMP + diphosphate + H(+). In Bacillus thuringiensis subsp. konkukian (strain 97-27), this protein is Phenylalanine--tRNA ligase beta subunit.